We begin with the raw amino-acid sequence, 445 residues long: Coronin-A (445 aa).

4 WD repeats span residues 77–117 (GHKS…LTDS), 127–167 (GHKR…NLTT), 170–209 (GHSD…IVNE), and 259–299 (DSAS…PYIH). Positions 410-444 (KNEKELREEYEKLKIRVAYLESEIVKKDAKIKELT) form a coiled coil.

Belongs to the WD repeat coronin family. In terms of assembly, binds to F-actin.

The protein resides in the cell surface. Its function is as follows. Required for normal motility. Participates in cytokinesis. This chain is Coronin-A (corA), found in Dictyostelium discoideum (Social amoeba).